Here is a 177-residue protein sequence, read N- to C-terminus: Ribulose bisphosphate carboxylase small subunit, chloroplastic (177 aa).

Residues 1-55 (MASLMSNAAVVTASTAAQANMVAPFSGLKSTSAFPVSRKSNVDITSLATNGGRVN) constitute a chloroplast transit peptide.

Belongs to the RuBisCO small chain family. In terms of assembly, heterohexadecamer of 8 large and 8 small subunits.

It is found in the plastid. The protein localises to the chloroplast. RuBisCO catalyzes two reactions: the carboxylation of D-ribulose 1,5-bisphosphate, the primary event in carbon dioxide fixation, as well as the oxidative fragmentation of the pentose substrate. Both reactions occur simultaneously and in competition at the same active site. Although the small subunit is not catalytic it is essential for maximal activity. The chain is Ribulose bisphosphate carboxylase small subunit, chloroplastic from Silene latifolia subsp. alba (White campion).